Here is a 293-residue protein sequence, read N- to C-terminus: Formamidopyrimidine-DNA glycosylase (293 aa).

Residue proline 2 is the Schiff-base intermediate with DNA of the active site. Catalysis depends on glutamate 3, which acts as the Proton donor. The active-site Proton donor; for beta-elimination activity is the lysine 58. DNA contacts are provided by histidine 104, arginine 123, and arginine 166. An FPG-type zinc finger spans residues 257-293 (AVYDREGEPCRSKGCDGVVKRFVQNGRSTFWCPKCQK). The Proton donor; for delta-elimination activity role is filled by arginine 283.

Belongs to the FPG family. Monomer. It depends on Zn(2+) as a cofactor.

It catalyses the reaction Hydrolysis of DNA containing ring-opened 7-methylguanine residues, releasing 2,6-diamino-4-hydroxy-5-(N-methyl)formamidopyrimidine.. The enzyme catalyses 2'-deoxyribonucleotide-(2'-deoxyribose 5'-phosphate)-2'-deoxyribonucleotide-DNA = a 3'-end 2'-deoxyribonucleotide-(2,3-dehydro-2,3-deoxyribose 5'-phosphate)-DNA + a 5'-end 5'-phospho-2'-deoxyribonucleoside-DNA + H(+). Involved in base excision repair of DNA damaged by oxidation or by mutagenic agents. Acts as a DNA glycosylase that recognizes and removes damaged bases. Has a preference for oxidized purines, such as 7,8-dihydro-8-oxoguanine (8-oxoG). Has AP (apurinic/apyrimidinic) lyase activity and introduces nicks in the DNA strand. Cleaves the DNA backbone by beta-delta elimination to generate a single-strand break at the site of the removed base with both 3'- and 5'-phosphates. This is Formamidopyrimidine-DNA glycosylase from Rhodopseudomonas palustris (strain BisB18).